The following is a 337-amino-acid chain: Methylthioribose-1-phosphate isomerase (337 aa).

Substrate contacts are provided by residues 47-49 (RGA), arginine 81, and glutamine 184. The Proton donor role is filled by aspartate 225. A substrate-binding site is contributed by 235–236 (NK).

Belongs to the eIF-2B alpha/beta/delta subunits family. MtnA subfamily.

It catalyses the reaction 5-(methylsulfanyl)-alpha-D-ribose 1-phosphate = 5-(methylsulfanyl)-D-ribulose 1-phosphate. The protein operates within amino-acid biosynthesis; L-methionine biosynthesis via salvage pathway; L-methionine from S-methyl-5-thio-alpha-D-ribose 1-phosphate: step 1/6. In terms of biological role, catalyzes the interconversion of methylthioribose-1-phosphate (MTR-1-P) into methylthioribulose-1-phosphate (MTRu-1-P). This Parasynechococcus marenigrum (strain WH8102) protein is Methylthioribose-1-phosphate isomerase.